Reading from the N-terminus, the 210-residue chain is Large ribosomal subunit protein bL25 (210 aa).

Positions 185–210 are disordered; that stretch reads APEPAGQPEVPPEPAEEAKAKTIEKE. Positions 200-210 are enriched in basic and acidic residues; that stretch reads EEAKAKTIEKE.

The protein belongs to the bacterial ribosomal protein bL25 family. CTC subfamily. As to quaternary structure, part of the 50S ribosomal subunit; part of the 5S rRNA/L5/L18/L25 subcomplex. Contacts the 5S rRNA. Binds to the 5S rRNA independently of L5 and L18.

Its function is as follows. This is one of the proteins that binds to the 5S RNA in the ribosome where it forms part of the central protuberance. The protein is Large ribosomal subunit protein bL25 of Desulforamulus reducens (strain ATCC BAA-1160 / DSM 100696 / MI-1) (Desulfotomaculum reducens).